The sequence spans 278 residues: ATP synthase subunit a (278 aa).

6 helical membrane-spanning segments follow: residues 43 to 63 (TWHI…LWIF), 104 to 124 (IAPL…MDMI), 148 to 168 (DVNI…FYSI), 191 to 211 (IPVN…SLAL), 222 to 242 (LIFI…TLGV), and 249 to 269 (LIFH…LTIV).

It belongs to the ATPase A chain family. In terms of assembly, F-type ATPases have 2 components, CF(1) - the catalytic core - and CF(0) - the membrane proton channel. CF(1) has five subunits: alpha(3), beta(3), gamma(1), delta(1), epsilon(1). CF(0) has three main subunits: a(1), b(2) and c(9-12). The alpha and beta chains form an alternating ring which encloses part of the gamma chain. CF(1) is attached to CF(0) by a central stalk formed by the gamma and epsilon chains, while a peripheral stalk is formed by the delta and b chains.

The protein localises to the cell inner membrane. In terms of biological role, key component of the proton channel; it plays a direct role in the translocation of protons across the membrane. This Shewanella baltica (strain OS185) protein is ATP synthase subunit a.